Consider the following 410-residue polypeptide: Arginine deiminase (410 aa).

C398 acts as the Amidino-cysteine intermediate in catalysis.

The protein belongs to the arginine deiminase family. As to quaternary structure, homodimer.

It localises to the cytoplasm. The catalysed reaction is L-arginine + H2O = L-citrulline + NH4(+). The protein operates within amino-acid degradation; L-arginine degradation via ADI pathway; carbamoyl phosphate from L-arginine: step 1/2. This Mycoplasmopsis arginini (Mycoplasma arginini) protein is Arginine deiminase (arcA).